Here is a 518-residue protein sequence, read N- to C-terminus: T-box transcription factor TBX5 (518 aa).

The tract at residues 1-46 (MADADEGFGLAHTPLEPDAKDLPCDSKPESALGAPSKSPSSPQAAF) is disordered. The span at 15–28 (LEPDAKDLPCDSKP) shows a compositional bias: basic and acidic residues. Positions 34–45 (APSKSPSSPQAA) are enriched in low complexity. The segment at residues 58–238 (LHERELWLKF…NNPFAKGFRG (181 aa)) is a DNA-binding region (T-box). The tract at residues 250–356 (MQSKEYPVVP…PSEEDSFYRS (107 aa)) is disordered. The span at 262–301 (TVRQKVASNHSPFSSESRALSTSSNLGSQYQCENGVSGPS) shows a compositional bias: polar residues. The residue at position 339 (K339) is an N6-acetyllysine.

Monomer. Homodimer (via the T-box); binds DNA as homodimer. Interacts (via the T-box) with NKX2-5 (via the homeobox); this complex binds DNA. Interacts with GATA4. Interacts with KAT2A and KAT2B. Post-translationally, acetylation at Lys-339 by KAT2A and KAT2B promotes nuclear retention.

The protein localises to the nucleus. The protein resides in the cytoplasm. DNA-binding protein that regulates the transcription of several genes and is involved in heart development and limb pattern formation. Binds to the core DNA motif of NPPA promoter. This is T-box transcription factor TBX5 (TBX5) from Homo sapiens (Human).